A 469-amino-acid chain; its full sequence is Extracellular endo-alpha-(1-&gt;5)-L-arabinanase 2 (469 aa).

An N-terminal signal peptide occupies residues 1–26 (MFNRLFRVCFLAALIMAFTLPNSVYA). Asp38 (proton acceptor) is an active-site residue. Substrate-binding positions include Asp38, Asp122, 168–171 (NVVD), 188–190 (SYS), and 220–224 (HSRIE). Catalysis depends on Glu224, which acts as the Proton donor. Residue His318 participates in Ca(2+) binding.

This sequence belongs to the glycosyl hydrolase 43 family. In terms of assembly, homodimer. Requires Ca(2+) as cofactor.

The protein resides in the secreted. The enzyme catalyses Endohydrolysis of (1-&gt;5)-alpha-arabinofuranosidic linkages in (1-&gt;5)-arabinans.. The protein operates within glycan metabolism; L-arabinan degradation. In terms of biological role, involved in the degradation of arabinan and is a key enzyme in the complete degradation of the plant cell wall. Catalyzes the internal cleavage of alpha-(1-&gt;5)-L-arabinofuranosyl residues of the alpha-1,5-L-arabinan to produce arabino-oligosaccharides and L-arabinose. It is also active toward linear branched sugar beet arabinan, and pectin from apple. The protein is Extracellular endo-alpha-(1-&gt;5)-L-arabinanase 2 (abn2) of Bacillus subtilis (strain 168).